A 182-amino-acid polypeptide reads, in one-letter code: Small ribosomal subunit protein uS5 (182 aa).

The region spanning 16-79 (FVDRLVHINR…ESAKRGMIYV (64 aa)) is the S5 DRBM domain.

Belongs to the universal ribosomal protein uS5 family. In terms of assembly, part of the 30S ribosomal subunit. Contacts proteins S4 and S8.

With S4 and S12 plays an important role in translational accuracy. Its function is as follows. Located at the back of the 30S subunit body where it stabilizes the conformation of the head with respect to the body. The polypeptide is Small ribosomal subunit protein uS5 (Bartonella tribocorum (strain CIP 105476 / IBS 506)).